Reading from the N-terminus, the 138-residue chain is UPF0201 protein PH1010 (138 aa).

It belongs to the UPF0201 family.

This is UPF0201 protein PH1010 from Pyrococcus horikoshii (strain ATCC 700860 / DSM 12428 / JCM 9974 / NBRC 100139 / OT-3).